Consider the following 205-residue polypeptide: DNA-directed RNA polymerase RPB5 homolog (205 aa).

Belongs to the archaeal RpoH/eukaryotic RPB5 RNA polymerase subunit family. As to quaternary structure, part of the viral DNA-directed RNA polymerase that consists of 8 polII-like subunits (RPB1, RPB2, RPB3, RPB5, RPB6, RPB7, RPB9, RPB10), a capping enzyme and a termination factor.

The protein resides in the host cytoplasm. The protein localises to the virion. Functionally, component of the DNA-directed RNA polymerase (RNAP) that catalyzes the transcription in the cytoplasm of viral DNA into RNA using the four ribonucleoside triphosphates as substrates. The chain is DNA-directed RNA polymerase RPB5 homolog from African swine fever virus (isolate Pig/Kenya/KEN-50/1950) (ASFV).